A 329-amino-acid chain; its full sequence is Beta-ketoacyl-[acyl-carrier-protein] synthase III (329 aa).

Active-site residues include cysteine 112 and histidine 253. Positions 254 to 258 are ACP-binding; the sequence is QANQR. The active site involves asparagine 283.

The protein belongs to the thiolase-like superfamily. FabH family. In terms of assembly, homodimer.

The protein localises to the cytoplasm. It catalyses the reaction malonyl-[ACP] + acetyl-CoA + H(+) = 3-oxobutanoyl-[ACP] + CO2 + CoA. It functions in the pathway lipid metabolism; fatty acid biosynthesis. In terms of biological role, catalyzes the condensation reaction of fatty acid synthesis by the addition to an acyl acceptor of two carbons from malonyl-ACP. Catalyzes the first condensation reaction which initiates fatty acid synthesis and may therefore play a role in governing the total rate of fatty acid production. Possesses both acetoacetyl-ACP synthase and acetyl transacylase activities. Its substrate specificity determines the biosynthesis of branched-chain and/or straight-chain of fatty acids. This chain is Beta-ketoacyl-[acyl-carrier-protein] synthase III, found in Gloeobacter violaceus (strain ATCC 29082 / PCC 7421).